Consider the following 1034-residue polypeptide: Ice nucleation protein InaU (1034 aa).

An octapeptide periodicity region spans residues 162-993 (ATYGSTLSGT…LTAGENSVLI (832 aa)). Disordered stretches follow at residues 260–287 (YGST…KGSD), 311–342 (TQTA…GYGS), 356–383 (YGST…KGSD), 407–438 (TQTA…GYGS), 452–480 (YGST…GSDL), and 570–597 (AREG…TGYG). 6 stretches are compositionally biased toward polar residues: residues 261–286 (GSTQ…QKGS), 311–334 (TQTA…QKGS), 357–382 (GSTQ…QKGS), 407–430 (TQTA…QKGS), 453–480 (GSTQ…GSDL), and 580–592 (YGST…NSDL).

Belongs to the bacterial ice nucleation protein family.

It is found in the cell outer membrane. In terms of biological role, ice nucleation proteins enable bacteria to nucleate crystallization in supercooled water. The sequence is that of Ice nucleation protein InaU (inaU) from Pantoea ananas (Erwinia uredovora).